The chain runs to 633 residues: Keratin, type II cytoskeletal 2 epidermal (633 aa).

The head stretch occupies residues methionine 1 to glutamine 189. Asymmetric dimethylarginine is present on arginine 18. Phosphoserine is present on residues serine 21, serine 24, and serine 60. The tract at residues glutamate 190–leucine 225 is coil 1A. The IF rod domain maps to glutamate 190–methionine 503. Residues glutamine 226–tyrosine 244 are linker 1. Residues isoleucine 245 to methionine 336 are coil 1B. The interval glutamine 337–isoleucine 360 is linker 12. The tract at residues isoleucine 361–glutamate 499 is coil 2. The interval glutamate 500–arginine 633 is tail. The span at serine 518–arginine 527 shows a compositional bias: low complexity. Positions serine 518 to arginine 633 are disordered. The span at glycine 528–glycine 613 shows a compositional bias: gly residues. Omega-N-methylarginine occurs at positions 588 and 612.

It belongs to the intermediate filament family. Heterotetramer of two type I and two type II keratins. Associates with KRT10.

Its subcellular location is the cytoplasm. Its function is as follows. Probably contributes to terminal cornification. Associated with keratinocyte activation, proliferation and keratinization. Required for maintenance of corneocytes and keratin filaments in suprabasal keratinocytes in the epidermis of the ear, potentially via moderation of expression and localization of keratins and their partner proteins. Plays a role in the establishment of the epidermal barrier on plantar skin. This chain is Keratin, type II cytoskeletal 2 epidermal (KRT2), found in Canis lupus familiaris (Dog).